We begin with the raw amino-acid sequence, 294 residues long: Probable enoyl-CoA hydratase 2 (294 aa).

Residues 84–85 (HG), Lys113, 190–195 (DLNPLH), Gly213, and Phe243 each bind (3R)-3-hydroxydecanoyl-CoA. One can recognise a MaoC-like domain in the interval 165–269 (DRAPDAISKQ…INPTTILFQS (105 aa)). The Microbody targeting signal signature appears at 292-294 (GSL).

Belongs to the short-chain dehydrogenases/reductases (SDR) family.

Its subcellular location is the peroxisome. The enzyme catalyses a (3R)-3-hydroxyacyl-CoA = a (2E)-enoyl-CoA + H2O. This is Probable enoyl-CoA hydratase 2 (mfeB) from Dictyostelium discoideum (Social amoeba).